The sequence spans 177 residues: ATP synthase subunit delta (177 aa).

This sequence belongs to the ATPase delta chain family. As to quaternary structure, F-type ATPases have 2 components, F(1) - the catalytic core - and F(0) - the membrane proton channel. F(1) has five subunits: alpha(3), beta(3), gamma(1), delta(1), epsilon(1). F(0) has three main subunits: a(1), b(2) and c(10-14). The alpha and beta chains form an alternating ring which encloses part of the gamma chain. F(1) is attached to F(0) by a central stalk formed by the gamma and epsilon chains, while a peripheral stalk is formed by the delta and b chains.

Its subcellular location is the cell inner membrane. Functionally, f(1)F(0) ATP synthase produces ATP from ADP in the presence of a proton or sodium gradient. F-type ATPases consist of two structural domains, F(1) containing the extramembraneous catalytic core and F(0) containing the membrane proton channel, linked together by a central stalk and a peripheral stalk. During catalysis, ATP synthesis in the catalytic domain of F(1) is coupled via a rotary mechanism of the central stalk subunits to proton translocation. Its function is as follows. This protein is part of the stalk that links CF(0) to CF(1). It either transmits conformational changes from CF(0) to CF(1) or is implicated in proton conduction. The protein is ATP synthase subunit delta of Cronobacter sakazakii (strain ATCC BAA-894) (Enterobacter sakazakii).